The primary structure comprises 376 residues: Succinyl-diaminopimelate desuccinylase (376 aa).

Residue H66 coordinates Zn(2+). Residue D68 is part of the active site. Residue D99 participates in Zn(2+) binding. E133 acts as the Proton acceptor in catalysis. Zn(2+) is bound by residues E134, E162, and H348.

It belongs to the peptidase M20A family. DapE subfamily. As to quaternary structure, homodimer. Zn(2+) is required as a cofactor. Co(2+) serves as cofactor.

It carries out the reaction N-succinyl-(2S,6S)-2,6-diaminopimelate + H2O = (2S,6S)-2,6-diaminopimelate + succinate. Its pathway is amino-acid biosynthesis; L-lysine biosynthesis via DAP pathway; LL-2,6-diaminopimelate from (S)-tetrahydrodipicolinate (succinylase route): step 3/3. Catalyzes the hydrolysis of N-succinyl-L,L-diaminopimelic acid (SDAP), forming succinate and LL-2,6-diaminopimelate (DAP), an intermediate involved in the bacterial biosynthesis of lysine and meso-diaminopimelic acid, an essential component of bacterial cell walls. The polypeptide is Succinyl-diaminopimelate desuccinylase (Nitrosococcus oceani (strain ATCC 19707 / BCRC 17464 / JCM 30415 / NCIMB 11848 / C-107)).